A 181-amino-acid polypeptide reads, in one-letter code: Protein GrpE (181 aa).

The protein belongs to the GrpE family. As to quaternary structure, homodimer.

It is found in the cytoplasm. Its function is as follows. Participates actively in the response to hyperosmotic and heat shock by preventing the aggregation of stress-denatured proteins, in association with DnaK and GrpE. It is the nucleotide exchange factor for DnaK and may function as a thermosensor. Unfolded proteins bind initially to DnaJ; upon interaction with the DnaJ-bound protein, DnaK hydrolyzes its bound ATP, resulting in the formation of a stable complex. GrpE releases ADP from DnaK; ATP binding to DnaK triggers the release of the substrate protein, thus completing the reaction cycle. Several rounds of ATP-dependent interactions between DnaJ, DnaK and GrpE are required for fully efficient folding. The polypeptide is Protein GrpE (Delftia acidovorans (strain DSM 14801 / SPH-1)).